Consider the following 320-residue polypeptide: ATP-dependent 6-phosphofructokinase (320 aa).

Glycine 11 is an ATP binding site. ADP is bound at residue arginine 21–arginine 25. ATP-binding positions include arginine 72–cysteine 73 and glycine 102–serine 105. Aspartate 103 lines the Mg(2+) pocket. Residue threonine 125–aspartate 127 participates in substrate binding. The active-site Proton acceptor is the aspartate 127. Arginine 154 is a binding site for ADP. Residues arginine 162 and methionine 169–arginine 171 each bind substrate. ADP contacts are provided by residues glycine 185–glutamate 187 and lysine 214–histidine 216. Substrate-binding positions include glutamate 223, arginine 244, and histidine 250 to arginine 253.

Belongs to the phosphofructokinase type A (PFKA) family. ATP-dependent PFK group I subfamily. Prokaryotic clade 'B1' sub-subfamily. Homotetramer. Requires Mg(2+) as cofactor.

The protein localises to the cytoplasm. The enzyme catalyses beta-D-fructose 6-phosphate + ATP = beta-D-fructose 1,6-bisphosphate + ADP + H(+). It participates in carbohydrate degradation; glycolysis; D-glyceraldehyde 3-phosphate and glycerone phosphate from D-glucose: step 3/4. Its activity is regulated as follows. Allosterically activated by ADP and other diphosphonucleosides, and allosterically inhibited by phosphoenolpyruvate. Its function is as follows. Catalyzes the phosphorylation of D-fructose 6-phosphate to fructose 1,6-bisphosphate by ATP, the first committing step of glycolysis. This is ATP-dependent 6-phosphofructokinase from Clostridium botulinum (strain Alaska E43 / Type E3).